Reading from the N-terminus, the 828-residue chain is DNA gyrase subunit A (828 aa).

Residues 38 to 501 (LPDARDGLKP…SYESIDTEDL (464 aa)) enclose the Topo IIA-type catalytic domain. The active-site O-(5'-phospho-DNA)-tyrosine intermediate is Tyr-126. The short motif at 528–534 (QNRGGKG) is the GyrA-box element.

This sequence belongs to the type II topoisomerase GyrA/ParC subunit family. As to quaternary structure, heterotetramer, composed of two GyrA and two GyrB chains. In the heterotetramer, GyrA contains the active site tyrosine that forms a transient covalent intermediate with DNA, while GyrB binds cofactors and catalyzes ATP hydrolysis.

The protein localises to the cytoplasm. It carries out the reaction ATP-dependent breakage, passage and rejoining of double-stranded DNA.. In terms of biological role, a type II topoisomerase that negatively supercoils closed circular double-stranded (ds) DNA in an ATP-dependent manner to modulate DNA topology and maintain chromosomes in an underwound state. Negative supercoiling favors strand separation, and DNA replication, transcription, recombination and repair, all of which involve strand separation. Also able to catalyze the interconversion of other topological isomers of dsDNA rings, including catenanes and knotted rings. Type II topoisomerases break and join 2 DNA strands simultaneously in an ATP-dependent manner. The polypeptide is DNA gyrase subunit A (Helicobacter pylori (strain J99 / ATCC 700824) (Campylobacter pylori J99)).